The sequence spans 847 residues: Glucans biosynthesis glucosyltransferase H (847 aa).

At 1-138 the chain is on the cytoplasmic side; sequence MNKTTEYIDA…KWRTVGTIRR (138 aa). A helical membrane pass occupies residues 139-156; sequence YILLILTLAQTVVATWYM. The Periplasmic segment spans residues 157–193; that stretch reads KTILPYQGWALINPMDMVGQDIWVSFMQLLPYMLQTG. Residues 194–216 traverse the membrane as a helical segment; it reads ILILFAVLFCWVSAGFWTALMGF. The Cytoplasmic segment spans residues 217 to 511; the sequence is LQLLIGRDKY…LVKGMHPVHR (295 aa). A helical membrane pass occupies residues 512-534; sequence AVFLTGVMSYLSAPLWFMFLALS. Residues 535–567 are Periplasmic-facing; sequence TALQVVHALTEPQYFLQPRQLFPVWPQWRPELA. The chain crosses the membrane as a helical span at residues 568 to 590; sequence IALFASTMVLLFLPKLLSIMLIW. At 591–602 the chain is on the cytoplasmic side; the sequence is CKGTKEYGGFWR. A helical membrane pass occupies residues 603-625; it reads VTLSLLLEVLFSVLLAPVRMLFH. Topologically, residues 626–679 are periplasmic; it reads TVFVVSAFLGWEVVWNSPQRDDDSTPWGEAFMRHGSQLLLGLVWAVGMAWLDLR. The chain crosses the membrane as a helical span at residues 680–702; that stretch reads FLFWLAPIVFSLILSPFVSVISS. Over 703 to 847 the chain is Cytoplasmic; sequence RSTVGLRTKR…ALQGRTSSAG (145 aa).

Belongs to the glycosyltransferase 2 family. OpgH subfamily.

It is found in the cell inner membrane. The protein operates within glycan metabolism; osmoregulated periplasmic glucan (OPG) biosynthesis. Functionally, involved in the biosynthesis of osmoregulated periplasmic glucans (OPGs). The sequence is that of Glucans biosynthesis glucosyltransferase H from Salmonella typhi.